Reading from the N-terminus, the 37-residue chain is Potassium channel toxin alpha-KTx 1.4 (37 aa).

Cystine bridges form between C7/C28, C13/C33, and C17/C35.

It belongs to the short scorpion toxin superfamily. Potassium channel inhibitor family. Alpha-KTx 01 subfamily. As to expression, expressed by the venom gland.

Its subcellular location is the secreted. Its function is as follows. Blocks selectively the high conductance calcium-activated (maxi-K) potassium channels. The protein is Potassium channel toxin alpha-KTx 1.4 of Centruroides limbatus (Bark scorpion).